We begin with the raw amino-acid sequence, 691 residues long: Elongation factor G (691 aa).

In terms of domain architecture, tr-type G spans 8–282 (EQTRNIGIMA…AVIDYLPAPT (275 aa)). Residues 17-24 (AHIDAGKT), 81-85 (DTPGH), and 135-138 (NKMD) contribute to the GTP site.

It belongs to the TRAFAC class translation factor GTPase superfamily. Classic translation factor GTPase family. EF-G/EF-2 subfamily.

Its subcellular location is the cytoplasm. Functionally, catalyzes the GTP-dependent ribosomal translocation step during translation elongation. During this step, the ribosome changes from the pre-translocational (PRE) to the post-translocational (POST) state as the newly formed A-site-bound peptidyl-tRNA and P-site-bound deacylated tRNA move to the P and E sites, respectively. Catalyzes the coordinated movement of the two tRNA molecules, the mRNA and conformational changes in the ribosome. The protein is Elongation factor G of Natranaerobius thermophilus (strain ATCC BAA-1301 / DSM 18059 / JW/NM-WN-LF).